We begin with the raw amino-acid sequence, 466 residues long: Ribulose bisphosphate carboxylase large chain (466 aa).

K4 carries the post-translational modification N6,N6,N6-trimethyllysine. The substrate site is built by N113 and T163. The active-site Proton acceptor is the K165. K167 contacts substrate. K191, D193, and E194 together coordinate Mg(2+). Residue K191 is modified to N6-carboxylysine. The active-site Proton acceptor is the H284. Substrate is bound by residues R285, H317, and S369.

Belongs to the RuBisCO large chain family. Type I subfamily. In terms of assembly, heterohexadecamer of 8 large chains and 8 small chains; disulfide-linked. The disulfide link is formed within the large subunit homodimers. It depends on Mg(2+) as a cofactor. Post-translationally, the disulfide bond which can form in the large chain dimeric partners within the hexadecamer appears to be associated with oxidative stress and protein turnover.

Its subcellular location is the plastid. The protein localises to the chloroplast. The catalysed reaction is 2 (2R)-3-phosphoglycerate + 2 H(+) = D-ribulose 1,5-bisphosphate + CO2 + H2O. It carries out the reaction D-ribulose 1,5-bisphosphate + O2 = 2-phosphoglycolate + (2R)-3-phosphoglycerate + 2 H(+). In terms of biological role, ruBisCO catalyzes two reactions: the carboxylation of D-ribulose 1,5-bisphosphate, the primary event in carbon dioxide fixation, as well as the oxidative fragmentation of the pentose substrate in the photorespiration process. Both reactions occur simultaneously and in competition at the same active site. The protein is Ribulose bisphosphate carboxylase large chain of Pinguicula caerulea (Blueflower butterwort).